We begin with the raw amino-acid sequence, 800 residues long: MPGKVYTDEMEGKSIKKKKLTETPLPKLKKRKMQNGETEDLDLEHVTESVNGEINNNNPTPKLKKNKKPAPKSDLSETAEQCDGEQPDPSTPTPKKVKKKKLKEGKEDSDAQEETNISLSSQGGQCDGEQPDPSTPTPKKIKKKKLKEGKEDSDAQEETDISEPQMNGVKSVKKSKKNTTGDEPAPKKRKTDTSEITAANECEEKELTKEEEEIKKEKIDGDFSKFPISKDTIKNLQAKGVTYLFPIQSKTFHTVYSGKDVVVQARTGTGKTFSFGIPLVERLSEDQQPLARGRAPRVIILTPTRELAIQITNELRSMTKKLKVACFYGGTPYQQQVFAIKDGIDFLVGTPGRIRDLVQNYRLDLTALKHVVLDEVDMMFDVGFSEQVEEILSVRYKPDPEENPQTLLFSATCPDWMYNVAKKYMRKQYEKVDLVGHRSQKAAITVEHLAIECNRSQKAAVLGDIVQVYSGSHGKTIIFCDSKLQAHELSTNCGSLKQSAKPLHGDLQQKEREVVLKGFRQGTFEVLIATNVAARGLDIPEVDLVVLYSAPKEADAYVHRSGRTGRAGRTGVCISLYEPWEKHYLRNVERSTGITFKRVGIPSLMNVAKSSSADAIKSLDTVPADVIEHFKEYAQELIEKKGALTALAAALAHISGATSIKQRSLLNMEAGYMTITLKSSVPIHNLSYAWRSIKEQLGEDVDSKIHRMCLLKDSMGVCFDVRSEDLQSMQESWSDTRRWQFTITTELPEIQESERSFDGPRNRSFGGRGRRPFDRRNNSRNSSGGGGGRRGRSGGFRRGR.

The span at 1–14 (MPGKVYTDEMEGKS) shows a compositional bias: basic and acidic residues. Positions 1–200 (MPGKVYTDEM…TDTSEITAAN (200 aa)) are disordered. A compositionally biased stretch (polar residues) spans 114–124 (ETNISLSSQGG). Positions 221-249 (GDFSKFPISKDTIKNLQAKGVTYLFPIQS) match the Q motif motif. A Helicase ATP-binding domain is found at 252–431 (FHTVYSGKDV…KKYMRKQYEK (180 aa)). 265-272 (ARTGTGKT) is a binding site for ATP. A DEAD box motif is present at residues 374–377 (DEVD). The region spanning 464-620 (DIVQVYSGSH…SSADAIKSLD (157 aa)) is the Helicase C-terminal domain. Residues 750 to 800 (IQESERSFDGPRNRSFGGRGRRPFDRRNNSRNSSGGGGGRRGRSGGFRRGR) are disordered. Basic and acidic residues predominate over residues 752-761 (ESERSFDGPR). The span at 789–800 (RRGRSGGFRRGR) shows a compositional bias: basic residues.

The protein belongs to the DEAD box helicase family. DDX21/DDX50 subfamily. In terms of tissue distribution, widely expressed. Expressed at higher level in stomach. Expressed at lower level compared to ddx21-a.

The protein localises to the nucleus. Its subcellular location is the nucleolus. The protein resides in the nucleoplasm. It localises to the cytoplasm. It is found in the cytosol. The protein localises to the mitochondrion. It carries out the reaction ATP + H2O = ADP + phosphate + H(+). Its function is as follows. RNA helicase that acts as a sensor of the transcriptional status of both RNA polymerase (Pol) I and II: promotes ribosomal RNA (rRNA) processing and transcription from polymerase II (Pol II). Binds various RNAs, such as rRNAs, snoRNAs, 7SK and, at lower extent, mRNAs. In the nucleolus, localizes to rDNA locus, where it directly binds rRNAs and snoRNAs, and promotes rRNA transcription, processing and modification. Required for rRNA 2'-O-methylation, possibly by promoting the recruitment of late-acting snoRNAs SNORD56 and SNORD58 with pre-ribosomal complexes. In the nucleoplasm, binds 7SK RNA and is recruited to the promoters of Pol II-transcribed genes: acts by facilitating the release of P-TEFb from inhibitory 7SK snRNP in a manner that is dependent on its helicase activity, thereby promoting transcription of its target genes. Required to prevent R-loop-associated DNA damage and transcription-associated genomic instability. The protein is Nucleolar RNA helicase 2-B (ddx21-b) of Xenopus laevis (African clawed frog).